A 476-amino-acid polypeptide reads, in one-letter code: Aspartyl/glutamyl-tRNA(Asn/Gln) amidotransferase subunit B (476 aa).

Belongs to the GatB/GatE family. GatB subfamily. Heterotrimer of A, B and C subunits.

The catalysed reaction is L-glutamyl-tRNA(Gln) + L-glutamine + ATP + H2O = L-glutaminyl-tRNA(Gln) + L-glutamate + ADP + phosphate + H(+). It catalyses the reaction L-aspartyl-tRNA(Asn) + L-glutamine + ATP + H2O = L-asparaginyl-tRNA(Asn) + L-glutamate + ADP + phosphate + 2 H(+). Its function is as follows. Allows the formation of correctly charged Asn-tRNA(Asn) or Gln-tRNA(Gln) through the transamidation of misacylated Asp-tRNA(Asn) or Glu-tRNA(Gln) in organisms which lack either or both of asparaginyl-tRNA or glutaminyl-tRNA synthetases. The reaction takes place in the presence of glutamine and ATP through an activated phospho-Asp-tRNA(Asn) or phospho-Glu-tRNA(Gln). In Bacillus pumilus (strain SAFR-032), this protein is Aspartyl/glutamyl-tRNA(Asn/Gln) amidotransferase subunit B.